The sequence spans 500 residues: Probable malate:quinone oxidoreductase (500 aa).

Belongs to the MQO family. FAD serves as cofactor.

It catalyses the reaction (S)-malate + a quinone = a quinol + oxaloacetate. Its pathway is carbohydrate metabolism; tricarboxylic acid cycle; oxaloacetate from (S)-malate (quinone route): step 1/1. The protein is Probable malate:quinone oxidoreductase of Bacillus cereus (strain ATCC 10987 / NRS 248).